Here is a 376-residue protein sequence, read N- to C-terminus: Polar flagellin A (376 aa).

Coiled-coil stretches lie at residues 103–128 (SNSK…RIAE) and 310–338 (FQNR…IKDT).

This sequence belongs to the bacterial flagellin family. Heteromer of multiple flagellin subunits including FlaA, FlaB/D, FlaC, FlaE and FlaF.

Its subcellular location is the secreted. The protein localises to the bacterial flagellum. Flagellin is the subunit protein which polymerizes to form the filaments of bacterial flagella. FlaA is not essential for polar flagellar synthesis and swimming motility. Homomer of FlaA is able to form a functional filament. The chain is Polar flagellin A (flaA) from Vibrio parahaemolyticus serotype O3:K6 (strain RIMD 2210633).